The chain runs to 648 residues: 1-deoxy-D-xylulose-5-phosphate synthase (648 aa).

Thiamine diphosphate contacts are provided by residues histidine 79 and 120 to 122; that span reads GHA. A Mg(2+)-binding site is contributed by aspartate 152. Residues 153–154, asparagine 181, phenylalanine 293, and glutamate 377 each bind thiamine diphosphate; that span reads GS. Asparagine 181 is a Mg(2+) binding site.

The protein belongs to the transketolase family. DXPS subfamily. Homodimer. Requires Mg(2+) as cofactor. Thiamine diphosphate serves as cofactor.

It carries out the reaction D-glyceraldehyde 3-phosphate + pyruvate + H(+) = 1-deoxy-D-xylulose 5-phosphate + CO2. It participates in metabolic intermediate biosynthesis; 1-deoxy-D-xylulose 5-phosphate biosynthesis; 1-deoxy-D-xylulose 5-phosphate from D-glyceraldehyde 3-phosphate and pyruvate: step 1/1. Functionally, catalyzes the acyloin condensation reaction between C atoms 2 and 3 of pyruvate and glyceraldehyde 3-phosphate to yield 1-deoxy-D-xylulose-5-phosphate (DXP). The sequence is that of 1-deoxy-D-xylulose-5-phosphate synthase from Bacteroides fragilis (strain ATCC 25285 / DSM 2151 / CCUG 4856 / JCM 11019 / LMG 10263 / NCTC 9343 / Onslow / VPI 2553 / EN-2).